The following is a 325-amino-acid chain: Pseudouridylate synthase TRUB2, mitochondrial (325 aa).

D101 acts as the Nucleophile in catalysis. The segment at 292–325 (QTEGVSRGNPDREAAEGPIPGPSRGAEGEGELRA) is disordered.

The protein belongs to the pseudouridine synthase TruB family.

The protein resides in the mitochondrion matrix. The catalysed reaction is a uridine in mRNA = a pseudouridine in mRNA. The enzyme catalyses uridine(55) in tRNA = pseudouridine(55) in tRNA. Functionally, minor enzyme contributing to the isomerization of uridine to pseudouridine (pseudouridylation) of specific mitochondrial mRNAs (mt-mRNAs) such as COXI and COXIII mt-mRNAs, modulating the efficiency of mitochondrial protein synthesis without changes in transcript abundance or stability. Also catalyzes pseudouridylation of some tRNAs, including synthesis of pseudouridine(55) from uracil-55, in the psi GC loop of a subset of tRNAs. The sequence is that of Pseudouridylate synthase TRUB2, mitochondrial from Xenopus tropicalis (Western clawed frog).